Reading from the N-terminus, the 128-residue chain is Sulfurtransferase TusD (128 aa).

Catalysis depends on Cys78, which acts as the Cysteine persulfide intermediate.

It belongs to the DsrE/TusD family. Heterohexamer, formed by a dimer of trimers. The hexameric TusBCD complex contains 2 copies each of TusB, TusC and TusD. The TusBCD complex interacts with TusE.

The protein resides in the cytoplasm. Part of a sulfur-relay system required for 2-thiolation of 5-methylaminomethyl-2-thiouridine (mnm(5)s(2)U) at tRNA wobble positions. Accepts sulfur from TusA and transfers it in turn to TusE. The chain is Sulfurtransferase TusD from Escherichia coli (strain 55989 / EAEC).